A 563-amino-acid chain; its full sequence is Arginine--tRNA ligase (563 aa).

The 'HIGH' region signature appears at 119 to 129; sequence ANPTGPLHVGR.

This sequence belongs to the class-I aminoacyl-tRNA synthetase family.

The protein resides in the cytoplasm. The enzyme catalyses tRNA(Arg) + L-arginine + ATP = L-arginyl-tRNA(Arg) + AMP + diphosphate. This is Arginine--tRNA ligase from Methanocella arvoryzae (strain DSM 22066 / NBRC 105507 / MRE50).